The following is a 153-amino-acid chain: Glucose-6-phosphate 1-dehydrogenase (153 aa).

Positions 21 and 120 each coordinate NADP(+). Lys120 contributes to the D-glucose 6-phosphate binding site.

This sequence belongs to the glucose-6-phosphate dehydrogenase family.

It is found in the cytoplasm. The protein localises to the cytosol. It catalyses the reaction D-glucose 6-phosphate + NADP(+) = 6-phospho-D-glucono-1,5-lactone + NADPH + H(+). The protein operates within carbohydrate degradation; pentose phosphate pathway; D-ribulose 5-phosphate from D-glucose 6-phosphate (oxidative stage): step 1/3. Its function is as follows. Cytosolic glucose-6-phosphate dehydrogenase that catalyzes the first and rate-limiting step of the oxidative branch within the pentose phosphate pathway/shunt, an alternative route to glycolysis for the dissimilation of carbohydrates and a major source of reducing power and metabolic intermediates for fatty acid and nucleic acid biosynthetic processes. This chain is Glucose-6-phosphate 1-dehydrogenase (ZW), found in Hyalophora cecropia (Cecropia moth).